Reading from the N-terminus, the 174-residue chain is Crossover junction endodeoxyribonuclease RuvC (174 aa).

Residues Asp8, Glu67, and Asp139 contribute to the active site. Mg(2+) is bound by residues Asp8, Glu67, and Asp139.

It belongs to the RuvC family. In terms of assembly, homodimer which binds Holliday junction (HJ) DNA. The HJ becomes 2-fold symmetrical on binding to RuvC with unstacked arms; it has a different conformation from HJ DNA in complex with RuvA. In the full resolvosome a probable DNA-RuvA(4)-RuvB(12)-RuvC(2) complex forms which resolves the HJ. Requires Mg(2+) as cofactor.

The protein resides in the cytoplasm. It carries out the reaction Endonucleolytic cleavage at a junction such as a reciprocal single-stranded crossover between two homologous DNA duplexes (Holliday junction).. The RuvA-RuvB-RuvC complex processes Holliday junction (HJ) DNA during genetic recombination and DNA repair. Endonuclease that resolves HJ intermediates. Cleaves cruciform DNA by making single-stranded nicks across the HJ at symmetrical positions within the homologous arms, yielding a 5'-phosphate and a 3'-hydroxyl group; requires a central core of homology in the junction. The consensus cleavage sequence is 5'-(A/T)TT(C/G)-3'. Cleavage occurs on the 3'-side of the TT dinucleotide at the point of strand exchange. HJ branch migration catalyzed by RuvA-RuvB allows RuvC to scan DNA until it finds its consensus sequence, where it cleaves and resolves the cruciform DNA. The sequence is that of Crossover junction endodeoxyribonuclease RuvC from Pseudomonas savastanoi pv. phaseolicola (strain 1448A / Race 6) (Pseudomonas syringae pv. phaseolicola (strain 1448A / Race 6)).